The following is an 86-amino-acid chain: Anti-adapter protein IraP (86 aa).

Residues Met1–Met36 are a coiled coil.

It belongs to the IraP family. In terms of assembly, interacts with RssB.

Its subcellular location is the cytoplasm. In terms of biological role, inhibits RpoS proteolysis by regulating RssB activity, thereby increasing the stability of the sigma stress factor RpoS especially during phosphate starvation, but also in stationary phase and during nitrogen starvation. Its effect on RpoS stability is due to its interaction with RssB, which probably blocks the interaction of RssB with RpoS, and the consequent delivery of the RssB-RpoS complex to the ClpXP protein degradation pathway. The sequence is that of Anti-adapter protein IraP from Shigella flexneri serotype 5b (strain 8401).